Consider the following 63-residue polypeptide: Large ribosomal subunit protein bL28 (63 aa).

Belongs to the bacterial ribosomal protein bL28 family.

The chain is Large ribosomal subunit protein bL28 from Syntrophotalea carbinolica (strain DSM 2380 / NBRC 103641 / GraBd1) (Pelobacter carbinolicus).